The sequence spans 318 residues: 2-oxoacid:ferredoxin oxidoreductase 1, subunit beta (318 aa).

[4Fe-4S] cluster-binding residues include Cys-18, Cys-21, and Cys-52. Residues 50–53 and His-69 contribute to the thiamine diphosphate site; that span reads IGCS. Position 94 (Asp-94) interacts with Mg(2+). 95–96 provides a ligand contact to thiamine diphosphate; the sequence is GD. 2 residues coordinate Mg(2+): Asn-122 and Val-124. 126–127 lines the thiamine diphosphate pocket; that stretch reads GL. Cys-201 contacts [4Fe-4S] cluster.

In terms of assembly, heterodimer composed of an alpha and a beta subunit. It depends on [4Fe-4S] cluster as a cofactor. Requires thiamine diphosphate as cofactor. Mg(2+) is required as a cofactor.

The catalysed reaction is a 2-oxocarboxylate + 2 oxidized [2Fe-2S]-[ferredoxin] + CoA = an acyl-CoA + 2 reduced [2Fe-2S]-[ferredoxin] + CO2 + H(+). In terms of biological role, catalyzes the coenzyme A-dependent oxidative decarboxylation of different 2-oxoacids such as pyruvate, 2-oxobutyrate and glyoxylate to form their CoA derivatives. The chain is 2-oxoacid:ferredoxin oxidoreductase 1, subunit beta from Aeropyrum pernix (strain ATCC 700893 / DSM 11879 / JCM 9820 / NBRC 100138 / K1).